An 85-amino-acid polypeptide reads, in one-letter code: UPF0291 protein SGO_0570 (85 aa).

The interval 56–85 (EDGNDVTPEKLRQVQREKGLHGRSLDDPNS) is disordered. Over residues 62-85 (TPEKLRQVQREKGLHGRSLDDPNS) the composition is skewed to basic and acidic residues.

It belongs to the UPF0291 family.

It localises to the cytoplasm. In Streptococcus gordonii (strain Challis / ATCC 35105 / BCRC 15272 / CH1 / DL1 / V288), this protein is UPF0291 protein SGO_0570.